The sequence spans 351 residues: Histidinol-phosphate aminotransferase 1 (351 aa).

At lysine 210 the chain carries N6-(pyridoxal phosphate)lysine.

This sequence belongs to the class-II pyridoxal-phosphate-dependent aminotransferase family. Histidinol-phosphate aminotransferase subfamily. As to quaternary structure, homodimer. Pyridoxal 5'-phosphate is required as a cofactor.

The catalysed reaction is L-histidinol phosphate + 2-oxoglutarate = 3-(imidazol-4-yl)-2-oxopropyl phosphate + L-glutamate. The protein operates within amino-acid biosynthesis; L-histidine biosynthesis; L-histidine from 5-phospho-alpha-D-ribose 1-diphosphate: step 7/9. The protein is Histidinol-phosphate aminotransferase 1 (hisC1) of Pseudomonas aeruginosa (strain ATCC 15692 / DSM 22644 / CIP 104116 / JCM 14847 / LMG 12228 / 1C / PRS 101 / PAO1).